The chain runs to 231 residues: 5'-methylthioadenosine/S-adenosylhomocysteine nucleosidase (231 aa).

E12 acts as the Proton acceptor in catalysis. Substrate contacts are provided by residues G78, I153, and 174–175 (ME). D198 functions as the Proton donor in the catalytic mechanism.

It belongs to the PNP/UDP phosphorylase family. MtnN subfamily.

It carries out the reaction S-adenosyl-L-homocysteine + H2O = S-(5-deoxy-D-ribos-5-yl)-L-homocysteine + adenine. The catalysed reaction is S-methyl-5'-thioadenosine + H2O = 5-(methylsulfanyl)-D-ribose + adenine. The enzyme catalyses 5'-deoxyadenosine + H2O = 5-deoxy-D-ribose + adenine. Its pathway is amino-acid biosynthesis; L-methionine biosynthesis via salvage pathway; S-methyl-5-thio-alpha-D-ribose 1-phosphate from S-methyl-5'-thioadenosine (hydrolase route): step 1/2. Functionally, catalyzes the irreversible cleavage of the glycosidic bond in both 5'-methylthioadenosine (MTA) and S-adenosylhomocysteine (SAH/AdoHcy) to adenine and the corresponding thioribose, 5'-methylthioribose and S-ribosylhomocysteine, respectively. Also cleaves 5'-deoxyadenosine, a toxic by-product of radical S-adenosylmethionine (SAM) enzymes, into 5-deoxyribose and adenine. This is 5'-methylthioadenosine/S-adenosylhomocysteine nucleosidase from Maridesulfovibrio salexigens (strain ATCC 14822 / DSM 2638 / NCIMB 8403 / VKM B-1763) (Desulfovibrio salexigens).